Here is a 230-residue protein sequence, read N- to C-terminus: Heptaprenylglyceryl phosphate synthase (230 aa).

Lys12 contributes to the sn-glycerol 1-phosphate binding site. Mg(2+)-binding residues include Asp14 and Thr40. Sn-glycerol 1-phosphate is bound by residues 159 to 164 (YIEYSG), Gly189, and 209 to 210 (GD).

This sequence belongs to the GGGP/HepGP synthase family. Group I subfamily. Homodimer. It depends on Mg(2+) as a cofactor.

It catalyses the reaction sn-glycerol 1-phosphate + all-trans-heptaprenyl diphosphate = 3-heptaprenyl-sn-glycero-1-phosphate + diphosphate. Its pathway is membrane lipid metabolism; glycerophospholipid metabolism. Functionally, prenyltransferase that catalyzes in vivo the transfer of the heptaprenyl moiety of heptaprenyl pyrophosphate (HepPP; 35 carbon atoms) to the C3 hydroxyl of sn-glycerol-1-phosphate (G1P), producing heptaprenylglyceryl phosphate (HepGP). This reaction is an ether-bond-formation step in the biosynthesis of archaea-type G1P-based membrane lipids found in Bacillales. This Staphylococcus aureus (strain USA300) protein is Heptaprenylglyceryl phosphate synthase.